A 1033-amino-acid polypeptide reads, in one-letter code: Potassium-transporting ATPase alpha chain 1 (1033 aa).

Residues 1 to 96 (MGKENYELYS…NALRPPRGTP (96 aa)) are Cytoplasmic-facing. Residues tyrosine 6 and tyrosine 9 each carry the phosphotyrosine modification. The segment at 14 to 39 (GTGPGGDMAAKMSKKKAGGGGGKKKE) is disordered. A compositionally biased stretch (basic residues) spans 25 to 38 (MSKKKAGGGGGKKK). Serine 26 is subject to Phosphoserine. The chain crosses the membrane as a helical span at residues 97–117 (EYVKFARQLAGGLQCLMWVAA). Residues 118–140 (AICLIAFAIQASEGDLTTDDNLY) are Lumenal-facing. The helical transmembrane segment at 141–161 (LALALIAVVVVTGCFGYYQEF) threads the bilayer. Over 162–297 (KSTNIIASFK…NEKTPIAIEI (136 aa)) the chain is Cytoplasmic. The helical transmembrane segment at 298–317 (EHFVDIIAGLAILFGATFFV) threads the bilayer. Over 318–329 (VAMCIGYTFLRA) the chain is Lumenal. A helical transmembrane segment spans residues 330-347 (MVFFMAIVVAYVPEGLLA). K(+) contacts are provided by valine 338, alanine 339, valine 341, and glutamate 343. At 348-781 (TVTVCLSLTA…EQGRLIFDNL (434 aa)) the chain is on the cytoplasmic side. Aspartate 385 (4-aspartylphosphate intermediate) is an active-site residue. Residues aspartate 385 and threonine 387 each contribute to the Mg(2+) site. Residues serine 461 and serine 599 each carry the phosphoserine modification. Mg(2+)-binding residues include aspartate 726 and aspartate 730. A helical transmembrane segment spans residues 782-801 (KKSIAYTLTKNIPELTPYLI). Position 795 (glutamate 795) interacts with K(+). Over 802 to 811 (YITVSVPLPL) the chain is Lumenal. A helical transmembrane segment spans residues 812–832 (GCITILFIELCTDIFPSVSLA). Glutamate 820 lines the K(+) pocket. Topologically, residues 833-852 (YEKAESDIMHLRPRNPRRDR) are cytoplasmic. Serine 838 bears the Phosphoserine mark. A helical membrane pass occupies residues 853–875 (LVNEPLAAYSYFQIGAIQSFAGF). Residues 876–927 (ADYFTAMAQEGWFPLLCVGLRPQWEDHHLQDLQDSYGQEWTFGQRLYQQYTC) lie on the Lumenal side of the membrane. The chain crosses the membrane as a helical span at residues 928–947 (YTVFFISIEMCQIADVLIRK). At 948–961 (TRRLSAFQQGFFRN) the chain is on the cytoplasmic side. Serine 952 carries the phosphoserine; by PKA modification. A helical membrane pass occupies residues 962–980 (RILVIAIVFQVCIGCFLCY). The Lumenal portion of the chain corresponds to 981-995 (CPGMPNIFNFMPIRF). Residues 996–1016 (QWWLVPMPFGLLIFVYDEIRK) form a helical membrane-spanning segment. Topologically, residues 1017 to 1033 (LGVRCCPGSWWDQELYY) are cytoplasmic.

This sequence belongs to the cation transport ATPase (P-type) (TC 3.A.3) family. Type IIC subfamily. As to quaternary structure, the gastric H(+)/K(+) ATPase pump is composed of the catalytic alpha subunit ATP4A and the regulatory beta subunit ATP4B. Interacts (via the P-domain) with ATP4B (via N-terminus); this interaction stabilizes the lumenal-open E2 conformation state and prevents the reverse reaction of the transport cycle.

It localises to the apical cell membrane. It catalyses the reaction K(+)(out) + ATP + H2O + H(+)(in) = K(+)(in) + ADP + phosphate + 2 H(+)(out). The catalytic subunit of the gastric H(+)/K(+) ATPase pump which transports H(+) ions in exchange for K(+) ions across the apical membrane of parietal cells. Uses ATP as an energy source to pump H(+) ions to the gastric lumen while transporting K(+) ion from the lumen into the cell. Remarkably generates a million-fold proton gradient across the gastric parietal cell membrane, acidifying the gastric juice down to pH 1. Within a transport cycle, the transfer of a H(+) ion across the membrane is coupled to ATP hydrolysis and is associated with a transient phosphorylation that shifts the pump conformation from inward-facing (E1) to outward-facing state (E2). The release of the H(+) ion in the stomach lumen is followed by binding of K(+) ion converting the pump conformation back to the E1 state. In Rattus norvegicus (Rat), this protein is Potassium-transporting ATPase alpha chain 1 (Atp4a).